The primary structure comprises 165 residues: Lipoprotein signal peptidase (165 aa).

3 helical membrane-spanning segments follow: residues 12–32, 70–90, and 102–122; these read WLWVVVAVLIIDLGSKFLILQ, WFFAGIAVGICVVLAVLMYRS, and ALIIGGALGNLFDRLWHGFVV. Catalysis depends on residues Asp-123 and Asp-141. The chain crosses the membrane as a helical span at residues 137–157; the sequence is FNLADSAICIGAALIVLEGFL.

This sequence belongs to the peptidase A8 family.

It localises to the cell inner membrane. It carries out the reaction Release of signal peptides from bacterial membrane prolipoproteins. Hydrolyzes -Xaa-Yaa-Zaa-|-(S,diacylglyceryl)Cys-, in which Xaa is hydrophobic (preferably Leu), and Yaa (Ala or Ser) and Zaa (Gly or Ala) have small, neutral side chains.. Its pathway is protein modification; lipoprotein biosynthesis (signal peptide cleavage). Functionally, this protein specifically catalyzes the removal of signal peptides from prolipoproteins. This is Lipoprotein signal peptidase from Klebsiella aerogenes (strain ATCC 13048 / DSM 30053 / CCUG 1429 / JCM 1235 / KCTC 2190 / NBRC 13534 / NCIMB 10102 / NCTC 10006 / CDC 819-56) (Enterobacter aerogenes).